The sequence spans 412 residues: Lipoyl synthase, mitochondrial (412 aa).

Cys127, Cys132, Cys138, Cys159, Cys163, Cys166, and Ser375 together coordinate [4Fe-4S] cluster. Residues Ser142 to Leu364 enclose the Radical SAM core domain.

Belongs to the radical SAM superfamily. Lipoyl synthase family. Requires [4Fe-4S] cluster as cofactor.

The protein resides in the mitochondrion. The enzyme catalyses [[Fe-S] cluster scaffold protein carrying a second [4Fe-4S](2+) cluster] + N(6)-octanoyl-L-lysyl-[protein] + 2 oxidized [2Fe-2S]-[ferredoxin] + 2 S-adenosyl-L-methionine + 4 H(+) = [[Fe-S] cluster scaffold protein] + N(6)-[(R)-dihydrolipoyl]-L-lysyl-[protein] + 4 Fe(3+) + 2 hydrogen sulfide + 2 5'-deoxyadenosine + 2 L-methionine + 2 reduced [2Fe-2S]-[ferredoxin]. It participates in protein modification; protein lipoylation via endogenous pathway; protein N(6)-(lipoyl)lysine from octanoyl-[acyl-carrier-protein]: step 2/2. In terms of biological role, catalyzes the radical-mediated insertion of two sulfur atoms into the C-6 and C-8 positions of the octanoyl moiety bound to the lipoyl domains of lipoate-dependent enzymes, thereby converting the octanoylated domains into lipoylated derivatives. The chain is Lipoyl synthase, mitochondrial from Leishmania infantum.